We begin with the raw amino-acid sequence, 350 residues long: Lipoyl synthase, mitochondrial (350 aa).

[4Fe-4S] cluster-binding residues include Cys-83, Cys-88, Cys-94, Cys-113, Cys-117, Cys-120, and Ser-328. Residues 96-317 (GGESGTATAT…EKVGNELGFA (222 aa)) form the Radical SAM core domain.

The protein belongs to the radical SAM superfamily. Lipoyl synthase family. The cofactor is [4Fe-4S] cluster.

It localises to the mitochondrion. The catalysed reaction is [[Fe-S] cluster scaffold protein carrying a second [4Fe-4S](2+) cluster] + N(6)-octanoyl-L-lysyl-[protein] + 2 oxidized [2Fe-2S]-[ferredoxin] + 2 S-adenosyl-L-methionine + 4 H(+) = [[Fe-S] cluster scaffold protein] + N(6)-[(R)-dihydrolipoyl]-L-lysyl-[protein] + 4 Fe(3+) + 2 hydrogen sulfide + 2 5'-deoxyadenosine + 2 L-methionine + 2 reduced [2Fe-2S]-[ferredoxin]. It functions in the pathway protein modification; protein lipoylation via endogenous pathway; protein N(6)-(lipoyl)lysine from octanoyl-[acyl-carrier-protein]: step 2/2. In terms of biological role, catalyzes the radical-mediated insertion of two sulfur atoms into the C-6 and C-8 positions of the octanoyl moiety bound to the lipoyl domains of lipoate-dependent enzymes, thereby converting the octanoylated domains into lipoylated derivatives. The polypeptide is Lipoyl synthase, mitochondrial (Trichoplax adhaerens (Trichoplax reptans)).